A 354-amino-acid chain; its full sequence is Guanine nucleotide-binding protein G(t) subunit alpha-2 (354 aa).

The tract at residues 1 to 27 is disordered; it reads MGSGASAEDKELAKRSKELEKKLQEDA. Residue Gly2 is the site of N-myristoyl glycine attachment. Residues 7–27 show a composition bias toward basic and acidic residues; sequence AEDKELAKRSKELEKKLQEDA. In terms of domain architecture, G-alpha spans 32 to 354; that stretch reads KTVKLLLLGA…KENLKDCGLF (323 aa). Residues 35–48 form a G1 motif region; sequence KLLLLGAGESGKST. GTP is bound by residues 40-47, 175-181, 200-204, 269-272, and Ala326; these read GAGESGKS, LRSRVKT, DVGGQ, and NKKD. Ser47 is a Mg(2+) binding site. The G2 motif stretch occupies residues 173-181; that stretch reads DVLRSRVKT. At Arg178 the chain carries ADP-ribosylarginine; by cholera toxin. Thr181 contacts Mg(2+). Positions 196 to 205 are G3 motif; the sequence is FRMFDVGGQR. Residues 265 to 272 are G4 motif; the sequence is VLFLNKKD. The G5 motif stretch occupies residues 324–329; that stretch reads TCATDT. At Cys351 the chain carries ADP-ribosylcysteine; by pertussis toxin.

The protein belongs to the G-alpha family. G(i/o/t/z) subfamily. As to quaternary structure, g proteins are composed of 3 units; alpha, beta and gamma. The alpha chain contains the guanine nucleotide binding site. In terms of tissue distribution, retinal rod outer segment.

Its subcellular location is the cell projection. The protein resides in the cilium. It is found in the photoreceptor outer segment. The protein localises to the photoreceptor inner segment. In terms of biological role, guanine nucleotide-binding proteins (G proteins) are involved as modulators or transducers in various transmembrane signaling systems. Transducin is an amplifier and one of the transducers of a visual impulse that performs the coupling between rhodopsin and cGMP-phosphodiesterase. In Homo sapiens (Human), this protein is Guanine nucleotide-binding protein G(t) subunit alpha-2 (GNAT2).